A 148-amino-acid polypeptide reads, in one-letter code: Multiprotein-bridging factor 1c (148 aa).

One can recognise an HTH cro/C1-type domain in the interval 91–145 (IQKARLEKKMSQADLAKQINERTQVVQEYENGKAVPNQAVLAKMEKVLGVKLRGK). The H-T-H motif DNA-binding region spans 102 to 121 (QADLAKQINERTQVVQEYEN).

It belongs to the MBF1 family. In terms of assembly, binds to TPS5. Expressed in leaves, roots, stems, flowers, siliques and shoots. Not detected in seeds.

It localises to the nucleus. The protein localises to the nucleolus. It is found in the cytoplasm. Transcriptional coactivator that stimulates transcriptional activity by bridging regulatory proteins and TBP, thereby recruiting TBP to promoters occupied by DNA-binding regulators. Involved in the tolerance to heat and osmotic stress by partially activating the ethylene-response signal transduction pathway. In Arabidopsis thaliana (Mouse-ear cress), this protein is Multiprotein-bridging factor 1c (MBF1C).